We begin with the raw amino-acid sequence, 250 residues long: Small ribosomal subunit protein uS3 (250 aa).

Residues Ile39–Lys111 enclose the KH type-2 domain.

Belongs to the universal ribosomal protein uS3 family. In terms of assembly, part of the 30S ribosomal subunit. Forms a tight complex with proteins S10 and S14.

Functionally, binds the lower part of the 30S subunit head. Binds mRNA in the 70S ribosome, positioning it for translation. The chain is Small ribosomal subunit protein uS3 from Ziziphus jujuba witches'-broom phytoplasma.